The following is a 210-amino-acid chain: Large ribosomal subunit protein bL25 (210 aa).

This sequence belongs to the bacterial ribosomal protein bL25 family. CTC subfamily. As to quaternary structure, part of the 50S ribosomal subunit; part of the 5S rRNA/L5/L18/L25 subcomplex. Contacts the 5S rRNA. Binds to the 5S rRNA independently of L5 and L18.

In terms of biological role, this is one of the proteins that binds to the 5S RNA in the ribosome where it forms part of the central protuberance. The protein is Large ribosomal subunit protein bL25 of Frankia casuarinae (strain DSM 45818 / CECT 9043 / HFP020203 / CcI3).